The sequence spans 664 residues: Transketolase 1 (664 aa).

H26 serves as a coordination point for substrate. Residues H66 and G114–L116 each bind thiamine diphosphate. Mg(2+) is bound at residue D155. Positions 156 and 185 each coordinate thiamine diphosphate. Mg(2+) contacts are provided by N185 and I187. The substrate site is built by H260, R357, and S384. H260 contributes to the thiamine diphosphate binding site. E411 serves as the catalytic Proton donor. F437 contributes to the thiamine diphosphate binding site. H461, D469, and R520 together coordinate substrate.

This sequence belongs to the transketolase family. In terms of assembly, homodimer. Mg(2+) serves as cofactor. Requires Ca(2+) as cofactor. Mn(2+) is required as a cofactor. The cofactor is Co(2+). It depends on thiamine diphosphate as a cofactor.

It catalyses the reaction D-sedoheptulose 7-phosphate + D-glyceraldehyde 3-phosphate = aldehydo-D-ribose 5-phosphate + D-xylulose 5-phosphate. In terms of biological role, catalyzes the transfer of a two-carbon ketol group from a ketose donor to an aldose acceptor, via a covalent intermediate with the cofactor thiamine pyrophosphate. This is Transketolase 1 (tkt1) from Vibrio parahaemolyticus serotype O3:K6 (strain RIMD 2210633).